Reading from the N-terminus, the 312-residue chain is Olfactory receptor 51I2 (312 aa).

The Extracellular segment spans residues 1-25 (MGLFNVTHPAFFLLTGIPGLESSHS). The N-linked (GlcNAc...) asparagine glycan is linked to asparagine 5. Residues 26 to 46 (WLSGPLCVMYAVALGGNTVIL) form a helical membrane-spanning segment. The Cytoplasmic segment spans residues 47 to 54 (QAVRVEPS). A helical transmembrane segment spans residues 55–75 (LHEPMYYFLSMLSFSDVAISM). Residues 76-99 (ATLPTVLRTFCLNARNITFDACLI) are Extracellular-facing. A disulfide bridge connects residues cysteine 97 and cysteine 189. A helical membrane pass occupies residues 100-120 (QMFLIHFFSMMESGILLAMSF). Residues 121-139 (DRYVAICDPLRYATVLTTE) are Cytoplasmic-facing. Residues 140 to 160 (VIAAMGLGAAARSFITLFPLP) traverse the membrane as a helical segment. At 161-196 (FLIKRLPICRSNVLSHSYCLHPDMMRLACADISINS) the chain is on the extracellular side. A helical transmembrane segment spans residues 197–217 (IYGLFVLVSTFGMDLFFIFLS). Topologically, residues 218–237 (YVLILRSVMATASREERLKA) are cytoplasmic. The chain crosses the membrane as a helical span at residues 238 to 258 (LNTCVSHILAVLAFYVPMIGV). At 259 to 273 (STVHRFGKHVPCYIH) the chain is on the extracellular side. A helical transmembrane segment spans residues 274–294 (VLMSNVYLFVPPVLNPLIYSA). At 295-312 (KTKEIRRAIFRMFHHIKI) the chain is on the cytoplasmic side.

It belongs to the G-protein coupled receptor 1 family.

It localises to the cell membrane. Functionally, odorant receptor. This is Olfactory receptor 51I2 (OR51I2) from Homo sapiens (Human).